Consider the following 264-residue polypeptide: Large ribosomal subunit protein uL2 (264 aa).

It belongs to the universal ribosomal protein uL2 family.

Its subcellular location is the cytoplasm. The polypeptide is Large ribosomal subunit protein uL2 (RPL8) (Tetrahymena thermophila (strain SB210)).